The sequence spans 571 residues: Potassium-transporting ATPase potassium-binding subunit (571 aa).

Transmembrane regions (helical) follow at residues 7-27, 66-86, 137-157, 188-208, 255-275, 286-306, 390-410, 430-450, 497-517, and 538-558; these read LQFA…GGYL, TYAL…YGIA, GLAV…AALI, FVVA…GFIV, IGNF…CFAF, WAVL…AMSF, VGLN…GLMV, TLYI…SVLI, IGVA…AIAG, and LFVG…FFPA.

The protein belongs to the KdpA family. As to quaternary structure, the system is composed of three essential subunits: KdpA, KdpB and KdpC.

The protein localises to the cell membrane. Functionally, part of the high-affinity ATP-driven potassium transport (or Kdp) system, which catalyzes the hydrolysis of ATP coupled with the electrogenic transport of potassium into the cytoplasm. This subunit binds the extracellular potassium ions and delivers the ions to the membrane domain of KdpB through an intramembrane tunnel. The chain is Potassium-transporting ATPase potassium-binding subunit from Mycobacterium bovis (strain ATCC BAA-935 / AF2122/97).